A 1033-amino-acid chain; its full sequence is Putative U-box domain-containing protein 42 (1033 aa).

A disordered region spans residues S145–Y226. Polar residues predominate over residues L200–Y226. The U-box domain occupies P245–A322. 5 ARM repeats span residues P483–I522, G523–L562, H564–E608, G610–K659, and A665–P704.

It catalyses the reaction S-ubiquitinyl-[E2 ubiquitin-conjugating enzyme]-L-cysteine + [acceptor protein]-L-lysine = [E2 ubiquitin-conjugating enzyme]-L-cysteine + N(6)-ubiquitinyl-[acceptor protein]-L-lysine.. It participates in protein modification; protein ubiquitination. Functions as an E3 ubiquitin ligase. This chain is Putative U-box domain-containing protein 42 (PUB42), found in Arabidopsis thaliana (Mouse-ear cress).